The chain runs to 204 residues: Lipid A acyltransferase PagP (204 aa).

The N-terminal stretch at 1–25 (MSYKHLISACIFSSLCLGQVNAVLA) is a signal peptide. Active-site residues include histidine 76, aspartate 119, and serine 120.

The protein belongs to the lipid A palmitoyltransferase family. In terms of assembly, homodimer.

It is found in the cell outer membrane. It carries out the reaction a lipid A + a 1,2-diacyl-sn-glycero-3-phosphocholine = a hepta-acyl lipid A + a 2-acyl-sn-glycero-3-phosphocholine. It catalyses the reaction a lipid IVA + a 1,2-diacyl-sn-glycero-3-phosphocholine = a lipid IVB + a 2-acyl-sn-glycero-3-phosphocholine. The catalysed reaction is a lipid IIA + a 1,2-diacyl-sn-glycero-3-phosphocholine = a lipid IIB + a 2-acyl-sn-glycero-3-phosphocholine. Functionally, transfers a fatty acid residue from the sn-1 position of a phospholipid to the N-linked hydroxyfatty acid chain on the proximal unit of lipid A or its precursors. This is Lipid A acyltransferase PagP from Yersinia enterocolitica serotype O:8 / biotype 1B (strain NCTC 13174 / 8081).